Reading from the N-terminus, the 686-residue chain is Secretin GspD 2 (686 aa).

The N-terminal stretch at 1–40 is a signal peptide; it reads MFWRDITLSVWRKKTTGLKTKKRLLPLVLAAALCSSPVWA. Positions 41 to 140 are N0, contacts GspC2; that stretch reads EEATFTANFK…VGEGSDNYAG (100 aa). The tract at residues 142–206 is N1; the sequence is EMVTKVVPVR…EVIQRVDHAG (65 aa). Residues 207–279 form an N2 region; the sequence is NRTEEVIPLD…LIRRLDSEME (73 aa). The N3 stretch occupies residues 282-357; sequence GNSQVFYLKY…SLQSVIEQLD (76 aa). Positions 360–627 are secretin; sequence RAQVHVEALI…VFIRPTILRD (268 aa). The cap gate stretch occupies residues 414 to 433; it reads PQKGSTVISENGATTINPDT. Residues 629–686 form a s domain, contacts AspS2 region; sequence MAADGVSQRKYNYMRAEQIYRDEQGLSLMPHTAQPVLPAQNQALPPEVRAFLNAGRTR.

Belongs to the bacterial secretin family. GSP D subfamily. Forms a cylindrical channel with 15 subunits, each of which interacts with the surrounding pilotin AspS2 proteins (also called GspS-beta). Interacts with inner cell membrane protein GspC2 in the periplasm. Forms multimers in the outer membrane. The isolated N0 domain forms dimers that self-assemble into rings.

Its subcellular location is the cell outer membrane. In terms of biological role, part of a type II secretion system (T2SS, formerly general secretion pathway, GSP) for the export of folded proteins across the outer membrane. This subunit forms the outer membrane channel. The protein is Secretin GspD 2 (gspD2) of Escherichia coli O78:H11 (strain H10407 / ETEC).